The primary structure comprises 417 residues: MKKYIVKCPGCGEVRDQYALHCPDDDALPRTEYFKKQIVPADMPGMWRYYDWLPVNGIIEKGSGRPVTYKSEGFAKELRLSDLNITFNGYWPENEGFIRTCSFKDLESFPTMQRLLENNERRVLVVASAGNTARAFAHVASITGYPLLLIVPKNSTHRLWTTEEDTSSVCTVTVDGDYYQAIAMAEKIAARDGFVSEGGARNVARRDGMGTVMLDAVLTTKSLPQHYFQAVGSGTGGISAWEAAMRLIEDGRFGNNMPRLHLAQNLPCAPLYSTWTGEQTNGNCPEEMYDDVLFNRKPPYLATGGVKDALDDTNGIIYGITNKEADEARKIFEENEGIDILPAPAIACAAIMKALEKGEIKADENIVLNITGGGQKRLEEELPTRQLSVDLALSPDDKDAENKILEKVAELLKNGGY.

Lysine 104 carries the post-translational modification N6-(pyridoxal phosphate)lysine. Pyridoxal 5'-phosphate contacts are provided by asparagine 131 and threonine 371.

Belongs to the threonine synthase family. Cysteate synthase subfamily. In terms of assembly, homotrimer. It depends on pyridoxal 5'-phosphate as a cofactor.

It catalyses the reaction O-phospho-L-serine + sulfite + H(+) = L-cysteate + phosphate. It participates in cofactor biosynthesis; coenzyme M biosynthesis. In terms of biological role, specifically catalyzes the beta-elimination of phosphate from L-phosphoserine and the beta-addition of sulfite to the dehydroalanine intermediate to produce L-cysteate. This is Cysteate synthase from Methanococcoides burtonii (strain DSM 6242 / NBRC 107633 / OCM 468 / ACE-M).